Here is a 143-residue protein sequence, read N- to C-terminus: Fido domain-containing protein DDB_G0283145 (143 aa).

One can recognise a Fido domain in the interval 1–128 (MKGIIVSDGV…TSHLALIILN (128 aa)). A helical membrane pass occupies residues 49 to 69 (SSPYAVAAWLLHAFVSIHPFI).

It is found in the membrane. The polypeptide is Fido domain-containing protein DDB_G0283145 (Dictyostelium discoideum (Social amoeba)).